The chain runs to 308 residues: Aspartate carbamoyltransferase catalytic subunit (308 aa).

Positions 49 and 50 each coordinate carbamoyl phosphate. L-aspartate is bound at residue Lys77. Arg99, His127, and Gln130 together coordinate carbamoyl phosphate. 2 residues coordinate L-aspartate: Arg160 and Arg211. Carbamoyl phosphate is bound by residues Ala252 and Pro253.

Belongs to the aspartate/ornithine carbamoyltransferase superfamily. ATCase family. As to quaternary structure, heterododecamer (2C3:3R2) of six catalytic PyrB chains organized as two trimers (C3), and six regulatory PyrI chains organized as three dimers (R2).

The catalysed reaction is carbamoyl phosphate + L-aspartate = N-carbamoyl-L-aspartate + phosphate + H(+). The protein operates within pyrimidine metabolism; UMP biosynthesis via de novo pathway; (S)-dihydroorotate from bicarbonate: step 2/3. Its function is as follows. Catalyzes the condensation of carbamoyl phosphate and aspartate to form carbamoyl aspartate and inorganic phosphate, the committed step in the de novo pyrimidine nucleotide biosynthesis pathway. In Geobacillus kaustophilus (strain HTA426), this protein is Aspartate carbamoyltransferase catalytic subunit.